The following is an 863-amino-acid chain: Leucine-rich repeat and death domain-containing protein 1 (863 aa).

Disordered stretches follow at residues 1 to 37 (MSEKEGMSEELEDTISQFRKESRSQSVKEPGFIKETS) and 51 to 100 (SSNQ…SQSL). Residues 88-100 (SETSTRTETSQSL) are compositionally biased toward low complexity. LRR repeat units follow at residues 143-166 (CKDNFTVNLEAKGLQEFPKDILKI), 167-189 (KYVKHLYLDKNQIKTFQGADSGD), 190-213 (LLGLEILSLQENGLSSLPSEIQLL), 214-236 (HNLRILNVSHNHISHIPKEISQL), 238-259 (NIRQLFFYNNYIENFPSDLECL), 260-282 (GNLEILSLGKNKLRHIPDTLPSL), 284-305 (YLRVLNLEYNQLTIFPKALCFL), 306-328 (PKLISLDLTGNLISSLPKEIREL), 329-351 (KNLETLLLDHNKLTFLAVEIFQL), 353-374 (KIKELQLADNKLEVISHKIENF), 375-397 (RELRILILDKNLLKNIPEKICCC), 398-420 (AMLECLTLSDNKLTELPKNIHKL), 422-443 (NLRKLHVNRNNMVKITDSISHL), 445-466 (NICSLEFSGNIIAGIPIEIKNC), 468-489 (KIIKIELNYNKIMYFPLGLCAL), 490-513 (DSLYYLSVNGNYISEIPADISFSK), 515-535 (LLHLELSENKLLIFSEHFCSL), 536-558 (INLKYLDLGKNQIKKIPASISNM), 560-581 (SLHVLILCCNKFETFPRELCTL), 582-604 (ENLRVLDLSENQLQKISSDICNL), 606-627 (RIQKLNFSSNQFIHFPIELCQL), 630-653 (LEQLNISQIKGRKLTRLPGELSNM), 654-676 (TQLKELDISNNAIREIPRNIGEL), 678-699 (NLVSLHAYNNQISYIPPSLLSL), 700-722 (NDLQQLNLSGNNLTALPSAIYNL), and 724-745 (SLKEINFDDNPLLRPPMEICKG). One can recognise a Death domain in the interval 767 to 855 (EKIFKIVANN…EIMDKITALN (89 aa)). The stretch at 856-863 (LFTRAIKF) is one LRR 27 repeat.

The chain is Leucine-rich repeat and death domain-containing protein 1 (LRRD1) from Macaca fascicularis (Crab-eating macaque).